The primary structure comprises 94 residues: Protein P19 (94 aa).

Functionally, binds to single-stranded DNA (ssDNA). This chain is Protein P19 (XIX), found in Acinetobacter calcoaceticus (Arthrobacter siderocapsulatus).